Consider the following 130-residue polypeptide: Sec-independent protein translocase protein TatB (130 aa).

A helical membrane pass occupies residues 1 to 21 (MFDIGFTELTLIFIIGLVVLG). Basic and acidic residues-rich tracts occupy residues 57–67 (QDMQERMEKQM) and 111–130 (PSDK…RRHD). Residues 57-130 (QDMQERMEKQ…NHDQDSRRHD (74 aa)) are disordered.

Belongs to the TatB family. In terms of assembly, the Tat system comprises two distinct complexes: a TatABC complex, containing multiple copies of TatA, TatB and TatC subunits, and a separate TatA complex, containing only TatA subunits. Substrates initially bind to the TatABC complex, which probably triggers association of the separate TatA complex to form the active translocon.

The protein resides in the cell inner membrane. Functionally, part of the twin-arginine translocation (Tat) system that transports large folded proteins containing a characteristic twin-arginine motif in their signal peptide across membranes. Together with TatC, TatB is part of a receptor directly interacting with Tat signal peptides. TatB may form an oligomeric binding site that transiently accommodates folded Tat precursor proteins before their translocation. This is Sec-independent protein translocase protein TatB from Alcanivorax borkumensis (strain ATCC 700651 / DSM 11573 / NCIMB 13689 / SK2).